A 123-amino-acid polypeptide reads, in one-letter code: Large ribosomal subunit protein bL12 (123 aa).

Belongs to the bacterial ribosomal protein bL12 family. In terms of assembly, homodimer. Part of the ribosomal stalk of the 50S ribosomal subunit. Forms a multimeric L10(L12)X complex, where L10 forms an elongated spine to which 2 to 4 L12 dimers bind in a sequential fashion. Binds GTP-bound translation factors.

Its function is as follows. Forms part of the ribosomal stalk which helps the ribosome interact with GTP-bound translation factors. Is thus essential for accurate translation. This is Large ribosomal subunit protein bL12 from Parvibaculum lavamentivorans (strain DS-1 / DSM 13023 / NCIMB 13966).